The primary structure comprises 133 residues: Arsenate reductase 1 (133 aa).

Catalysis depends on nucleophile residues Cys10, Cys82, and Cys89. 2 disulfide bridges follow: Cys10–Cys82 and Cys82–Cys89.

This sequence belongs to the low molecular weight phosphotyrosine protein phosphatase family. Thioredoxin-coupled ArsC subfamily.

It localises to the cytoplasm. The catalysed reaction is arsenate + [thioredoxin]-dithiol + H(+) = arsenite + [thioredoxin]-disulfide + H2O. Functionally, catalyzes the reduction of arsenate [As(V)] to arsenite [As(III)]. In Staphylococcus haemolyticus (strain JCSC1435), this protein is Arsenate reductase 1.